The chain runs to 336 residues: D-alanine--D-alanine ligase (336 aa).

One can recognise an ATP-grasp domain in the interval 124-330 (KMWFSALGIP…FTEYLSLVIK (207 aa)). ATP is bound at residue 154–209 (ALENWGSIFVKAASQGSSVGCYKVDDSSKVAGVLKDAFGYAPYVIVEKTIKARELE). Mg(2+) is bound by residues Asp-284, Glu-297, and Asn-299.

The protein belongs to the D-alanine--D-alanine ligase family. Requires Mg(2+) as cofactor. The cofactor is Mn(2+).

It localises to the cytoplasm. It carries out the reaction 2 D-alanine + ATP = D-alanyl-D-alanine + ADP + phosphate + H(+). Its pathway is cell wall biogenesis; peptidoglycan biosynthesis. Its function is as follows. Cell wall formation. This is D-alanine--D-alanine ligase from Shewanella sp. (strain MR-7).